The primary structure comprises 254 residues: Persulfide dioxygenase ETHE1, mitochondrial (254 aa).

The N-terminal 7 residues, 1–7, are a transit peptide targeting the mitochondrion; it reads MAGSVLK. Ser-14 and Ser-19 each carry phosphoserine. Lys-32 is subject to N6-acetyllysine; alternate. Lys-32 carries the post-translational modification N6-succinyllysine; alternate. Lys-66 carries the N6-acetyllysine modification. Positions 79, 135, and 154 each coordinate Fe cation.

The protein belongs to the metallo-beta-lactamase superfamily. Glyoxalase II family. Homodimer. Monomer. Interacts with TST. May interact with RELA. Requires Fe(2+) as cofactor.

The protein localises to the cytoplasm. Its subcellular location is the nucleus. It localises to the mitochondrion matrix. It carries out the reaction S-sulfanylglutathione + O2 + H2O = sulfite + glutathione + 2 H(+). With respect to regulation, glutathione increases enzyme activity. Functionally, sulfur dioxygenase that plays an essential role in hydrogen sulfide catabolism in the mitochondrial matrix. Hydrogen sulfide (H(2)S) is first oxidized by SQRDL, giving rise to cysteine persulfide residues. ETHE1 consumes molecular oxygen to catalyze the oxidation of the persulfide, once it has been transferred to a thiophilic acceptor, such as glutathione (R-SSH). Plays an important role in metabolic homeostasis in mitochondria by metabolizing hydrogen sulfide and preventing the accumulation of supraphysiological H(2)S levels that have toxic effects, due to the inhibition of cytochrome c oxidase. First described as a protein that can shuttle between the nucleus and the cytoplasm and suppress p53-induced apoptosis by sequestering the transcription factor RELA/NFKB3 in the cytoplasm and preventing its accumulation in the nucleus. This chain is Persulfide dioxygenase ETHE1, mitochondrial (ETHE1), found in Bos taurus (Bovine).